The sequence spans 407 residues: Peptidase T (407 aa).

His81 contacts Zn(2+). Residue Asp83 is part of the active site. Asp142 is a binding site for Zn(2+). Glu176 (proton acceptor) is an active-site residue. Residues Glu177, Asp199, and His381 each coordinate Zn(2+).

Belongs to the peptidase M20B family. Zn(2+) serves as cofactor.

Its subcellular location is the cytoplasm. It carries out the reaction Release of the N-terminal residue from a tripeptide.. Cleaves the N-terminal amino acid of tripeptides. The chain is Peptidase T from Streptococcus sanguinis (strain SK36).